The sequence spans 148 residues: Small ribosomal subunit protein bS16 (148 aa).

The interval 107–148 (AAARAAAGAEDRPATTPKKAKKAASADGADAPAADAPTAAGQ) is disordered. The segment covering 129–148 (AASADGADAPAADAPTAAGQ) has biased composition (low complexity).

Belongs to the bacterial ribosomal protein bS16 family.

This Frankia alni (strain DSM 45986 / CECT 9034 / ACN14a) protein is Small ribosomal subunit protein bS16.